A 558-amino-acid chain; its full sequence is NAD(P)H-quinone oxidoreductase chain 4 (558 aa).

14 consecutive transmembrane segments (helical) span residues 25-45 (FPWL…VPFI), 56-76 (WYAL…YLKG), 111-131 (LILL…PVSF), 133-153 (PKLF…VFAV), 157-177 (LLFF…LAIW), 189-209 (FIIY…AMGF), 230-250 (GFQL…LPVV), 264-284 (TAPV…YALL), 298-318 (FAPL…LTSF), 327-347 (IAYS…SFSS), 353-373 (AMLQ…LVGA), 395-417 (IMFA…SGFV), 438-458 (IVIA…LLSM), and 485-505 (IYVI…PRIM).

The protein belongs to the complex I subunit 4 family.

The protein localises to the cellular thylakoid membrane. It carries out the reaction a plastoquinone + NADH + (n+1) H(+)(in) = a plastoquinol + NAD(+) + n H(+)(out). It catalyses the reaction a plastoquinone + NADPH + (n+1) H(+)(in) = a plastoquinol + NADP(+) + n H(+)(out). NDH-1 shuttles electrons from NAD(P)H, via FMN and iron-sulfur (Fe-S) centers, to quinones in the respiratory chain. The immediate electron acceptor for the enzyme in this species is believed to be plastoquinone. Couples the redox reaction to proton translocation (for every two electrons transferred, four hydrogen ions are translocated across the cytoplasmic membrane), and thus conserves the redox energy in a proton gradient. The chain is NAD(P)H-quinone oxidoreductase chain 4 from Prochlorococcus marinus (strain MIT 9211).